Here is a 153-residue protein sequence, read N- to C-terminus: MAEHLMSDVPFWQSKTLDEMSDAEWESLCDGCGQCCLHKLMDEDTDEIYFTNVACRQLNIKTCQCRNYERRFEFEPDCIKLTRENLPTFEWLPMTCAYRLLAEGKDLPAWHPLLTGSKAAMHGERISVRHIAVKESEVIDWQDHILNKPDWAQ.

The protein belongs to the UPF0260 family.

In Shigella flexneri serotype 5b (strain 8401), this protein is UPF0260 protein YcgN.